Consider the following 1479-residue polypeptide: Type VII secretion system protein EssC (1479 aa).

The Cytoplasmic segment spans residues 1–229 (MHKLIIKYNK…RPPQPIQKNN (229 aa)). The helical transmembrane segment at 230 to 252 (TVIWRSIIPPLVMIALTVVIFLV) threads the bilayer. The Extracellular segment spans residues 253–256 (RPIG). A helical transmembrane segment spans residues 257–279 (IYILMMIGMSSVTIVFGITTYFS). Residues 280–1479 (EKKKYNKDVE…QAYQKIRWFK (1200 aa)) lie on the Cytoplasmic side of the membrane. FtsK domains follow at residues 652 to 846 (DDIL…QDSN) and 997 to 1183 (QGPM…SEVS). Residues 672–679 (GTTGSGKS) and 1014–1021 (GSPGYGRT) each bind ATP.

It belongs to the EssC family. Homooligomer. Interacts with EsaE.

It is found in the cell membrane. Component of the type VII secretion system (Ess). Required for the secretion of substrates including EsxA and EsxB. However, unable to support secretion of the substrate protein EsxC. The chain is Type VII secretion system protein EssC from Staphylococcus aureus (strain MSSA476).